The following is a 217-amino-acid chain: 3-demethoxyubiquinol 3-hydroxylase (217 aa).

Fe cation-binding residues include glutamate 66, glutamate 96, histidine 99, glutamate 148, glutamate 180, and histidine 183.

It belongs to the COQ7 family. Requires Fe cation as cofactor.

It localises to the cell membrane. It catalyses the reaction a 5-methoxy-2-methyl-3-(all-trans-polyprenyl)benzene-1,4-diol + AH2 + O2 = a 3-demethylubiquinol + A + H2O. It functions in the pathway cofactor biosynthesis; ubiquinone biosynthesis. Functionally, catalyzes the hydroxylation of 2-nonaprenyl-3-methyl-6-methoxy-1,4-benzoquinol during ubiquinone biosynthesis. This is 3-demethoxyubiquinol 3-hydroxylase from Xanthomonas oryzae pv. oryzae (strain MAFF 311018).